The primary structure comprises 278 residues: UPF0276 protein Swit_4400 (278 aa).

It belongs to the UPF0276 family.

The protein is UPF0276 protein Swit_4400 of Rhizorhabdus wittichii (strain DSM 6014 / CCUG 31198 / JCM 15750 / NBRC 105917 / EY 4224 / RW1) (Sphingomonas wittichii).